A 702-amino-acid chain; its full sequence is Epsin-1 (702 aa).

The region spanning 10–142 (NFSKGYTDTQ…EDEHALKEAR (133 aa)) is the ENTH domain. 2 stretches are compositionally biased toward basic and acidic residues: residues 136-160 (HALK…SSRF) and 183-192 (SRYDDDDRDH). A disordered region spans residues 136–285 (HALKEARGDS…HQREREQQEQ (150 aa)). Over residues 193–214 (RSRRRSRSRRPGRSRSRRRSRR) the composition is skewed to basic residues. Residues S212, S216, S218, and S223 each carry the phosphoserine modification. 2 consecutive UIM domains span residues 226–245 (ENDP…AEED) and 254–273 (DSEA…DEAR). A compositionally biased stretch (basic and acidic residues) spans 230–248 (ELQRVIEESKRQAEEDAKR). The residue at position 255 (S255) is a Phosphoserine. Over residues 266-283 (SKEEDEARQRHQREREQQ) the composition is skewed to basic and acidic residues. A Phosphothreonine modification is found at T406. Disordered stretches follow at residues 504-589 (NHTG…RTGD) and 683-702 (PMQG…LIDL). Over residues 514 to 534 (TGLQRQTTGYTGNNNPYSRPL) the composition is skewed to polar residues. Positions 535 to 549 (QSQSTGILQQQQQQS) are enriched in low complexity. The segment covering 557 to 577 (KTGSNNPFAQFSNLPSQSTAP) has biased composition (polar residues). The segment covering 683–695 (PMQGMQQQSMQPQ) has biased composition (low complexity).

This sequence belongs to the epsin family.

The protein localises to the cytoplasm. It is found in the membrane. In terms of biological role, binds to membranes enriched in phosphatidylinositol 3,5-bisphosphate (PtdIns(3,5)P2) and phosphatidylinositol 4,5-bisphosphate (PtdIns(4,5)P2). Required for endocytosis and localization of actin. In Schizosaccharomyces pombe (strain 972 / ATCC 24843) (Fission yeast), this protein is Epsin-1 (ent1).